A 305-amino-acid polypeptide reads, in one-letter code: Suppressor of activated egl-4 protein 2 (305 aa).

Positions 138-168 are disordered; that stretch reads KRGYESDSSDVSGVSHCSDAKRRRGRPRKDE. Positions 158–170 form a DNA-binding region, a.T hook; it reads KRRRGRPRKDEEA.

In terms of assembly, interacts with phosphorylated egl-4. May interact with itself. May be a component of a histone deacetylase complex containing saeg-2, saeg-1 and hda-2. In terms of tissue distribution, ubiquitously expressed.

It localises to the nucleus. As a likely component of a histone deacetylase complex, together with saeg-1 and hda-2, functions downstream of the cAMP-dependent kinase egl-4 to regulate the expression of genes required for egg-laying and foraging. The protein is Suppressor of activated egl-4 protein 2 of Caenorhabditis elegans.